Here is a 443-residue protein sequence, read N- to C-terminus: ATP-dependent RNA helicase SUB2 (443 aa).

A Q motif motif is present at residues 60–88; that stretch reads TGFRDFLLKPELLRAITDCGFEHPSEVQQ. Residues 91–266 form the Helicase ATP-binding domain; it reads IPTAILKVDV…KKFMRNPLEV (176 aa). 104-111 provides a ligand contact to ATP; sequence AKSGLGKT. The short motif at 213–216 is the DEAD box element; sequence DECD. A Helicase C-terminal domain is found at 294–439; that stretch reads KLNELLDNLE…EYPEEGVDAS (146 aa).

This sequence belongs to the DEAD box helicase family. DECD subfamily.

The protein localises to the nucleus. The enzyme catalyses ATP + H2O = ADP + phosphate + H(+). ATP-binding RNA helicase involved in transcription elongation and required for the export of mRNA out of the nucleus. SUB2 also plays a role in pre-mRNA splicing and spliceosome assembly. May be involved in rDNA and telomeric silencing, and maintenance of genome integrity. The chain is ATP-dependent RNA helicase SUB2 (SUB2) from Coccidioides immitis (strain RS) (Valley fever fungus).